A 347-amino-acid polypeptide reads, in one-letter code: (RS)-norcoclaurine 6-O-methyltransferase (347 aa).

5 residues coordinate S-adenosyl-L-methionine: Gly-192, Asp-215, Asp-235, Met-236, and Lys-249. The active-site Proton acceptor is His-253.

It belongs to the class I-like SAM-binding methyltransferase superfamily. Cation-independent O-methyltransferase family. COMT subfamily. Homodimer.

It carries out the reaction norcoclaurine + S-adenosyl-L-methionine = coclaurine + S-adenosyl-L-homocysteine + H(+). It functions in the pathway alkaloid biosynthesis; (S)-reticuline biosynthesis; (S)-reticuline from (S)-norcoclaurine: step 1/4. Its function is as follows. Catalyzes the transfer of the S-methyl group of S-adenosyl-L-methionine (AdoMet) to the 6-hydroxyl group of norcoclaurine to form coclaurine. The chain is (RS)-norcoclaurine 6-O-methyltransferase from Coptis japonica (Japanese goldthread).